The chain runs to 175 residues: ADP-ribosylation factor 6 (175 aa).

Gly-2 is lipidated: N-myristoyl glycine. GTP-binding positions include Gly-20–Thr-27, Asp-63–Gln-67, and Asn-122–Asp-125.

This sequence belongs to the small GTPase superfamily. Arf family. Expressed in the head (at protein level).

Its subcellular location is the golgi apparatus. Activation is generally mediated by a guanine exchange factor (GEF), while inactivation through hydrolysis of bound GTP is catalyzed by a GTPase activating protein (GAP). May be activated by Efa6. Functionally, GTP-binding protein involved in protein trafficking; may modulate vesicle budding and uncoating within the Golgi apparatus. Promotes cell movement and remodeling of the actin cytoskeleton during compound eye morphogenesis. Required for normal ethanol-induced tolerance and preference. Probably after Efa6-mediated activation, counteracts ethanol-induced sedation. This Drosophila melanogaster (Fruit fly) protein is ADP-ribosylation factor 6.